The primary structure comprises 650 residues: MGKIIGIDLGTTNSCVAIMEGNQVKVIENSEGTRTTPSIIAYMDDNEVLVGAPAKRQSVTNPKNTLFAVKRLIGRRFEEKEVQKDIGLMPYTIVKADNGDAWVEAHGEKLAPPQVSAEVLRKMKKTAEDYLGEPVTEAVITVPAYFNDSQRQATKDAGRIAGLEVKRIINEPTAAALAFGLDKVEKGDRKIAVYDLGGGTFDVSIIEIADVDGEMQFEVLSTNGDTFLGGEDFDQRIIDYIIGEFKKEQGVDLSKDVLALQRLKEAAEKAKIELSSSQQTEINLPYITADASGPKHLNLKITRAKLEALVEDLVERTIEPCRIAIKDAGVKVSDIDDVILVGGQTRMPKVLEKVKEFFGKDPRRDVNPDEAVAVGAAIQGQVLSGDRKDVLLLDVTPLSLGIETLGGVMTKMISKNTTIPTKHAQVYSTADDNQGAVTIKVFQGEREMAAGNKLLGEFNLEGIPPAPRGVPQIEVTFDIDANGILHVGAKDKATGKENKITIKANSGLSEAEIDQMIKDAEANAAEDHKLRELADSRNQGDALVHSTKKALTEYGDKLDAGEKEAIEASLKSLEELLKDSSADKAAIDAKVEELGKVSQKLGEKMYADMQAQQAGAAGAAGAAEGAAHAGGAQQAADDVVDAEFKEVKKD.

T200 bears the Phosphothreonine; by autocatalysis mark. The tract at residues 614 to 635 is disordered; that stretch reads AGAAGAAGAAEGAAHAGGAQQA.

This sequence belongs to the heat shock protein 70 family.

Functionally, acts as a chaperone. This is Chaperone protein DnaK from Burkholderia lata (strain ATCC 17760 / DSM 23089 / LMG 22485 / NCIMB 9086 / R18194 / 383).